The chain runs to 318 residues: Olfactory receptor 13C2 (318 aa).

Topologically, residues 1 to 25 are extracellular; that stretch reads MEWENHTILVEFFLKGLSGHPRLEL. Asparagine 5 is a glycosylation site (N-linked (GlcNAc...) asparagine). A helical transmembrane segment spans residues 26–46; sequence LFFVLIFIMYVVILLGNGTLI. The Cytoplasmic portion of the chain corresponds to 47–54; it reads LISILDPH. A helical transmembrane segment spans residues 55–75; sequence LHTPMYFFLGNLSFLDICYTT. Over 76–99 the chain is Extracellular; that stretch reads TSIPSTLVSFLSERKTISLSGCAV. A disulfide bond links cysteine 97 and cysteine 189. The helical transmembrane segment at 100–120 threads the bilayer; it reads QMFLGLAMGTTECVLLGMMAF. At 121–139 the chain is on the cytoplasmic side; sequence DRYVAICNPLRYPIIMSKD. Residues 140-160 traverse the membrane as a helical segment; the sequence is AYVPMAAGSWIIGAVNSAVQS. The Extracellular segment spans residues 161 to 197; that stretch reads VFVVQLPFCRNNIINHFTCEILAVMKLACADISDNEF. A helical membrane pass occupies residues 198 to 217; that stretch reads IMLVATTLFILTPLLLIIVS. The Cytoplasmic portion of the chain corresponds to 218–237; the sequence is YTLIIVSIFKISSSEGRSKA. A helical membrane pass occupies residues 238 to 258; it reads SSTCSAHLTVVIIFYGTILFM. The Extracellular segment spans residues 259–277; the sequence is YMKPKSKETLNSDDLDATD. A helical transmembrane segment spans residues 278–298; that stretch reads KIISMFYGVMTPMMNPLIYSL. At 299-318 the chain is on the cytoplasmic side; that stretch reads RNKDVKEAVKHLLNRRFFSK.

It belongs to the G-protein coupled receptor 1 family.

It localises to the cell membrane. Its function is as follows. Odorant receptor. This Homo sapiens (Human) protein is Olfactory receptor 13C2 (OR13C2).